Reading from the N-terminus, the 120-residue chain is Basic phospholipase A2 homolog LmutTX (120 aa).

Intrachain disulfides connect C26/C114, C28/C44, C43/C95, C49/C120, C50/C88, C57/C81, and C75/C86.

Belongs to the phospholipase A2 family. Group II subfamily. K49 sub-subfamily. In terms of assembly, monomer. Expressed by the venom gland.

The protein localises to the secreted. Snake venom phospholipase A2 homolog that lacks enzymatic activity. Shows moderate cytotoxicity against C2C12 myotubes (activity above 200 ug/mL). Also shows antibacterial activity against both Gram-positive and Gram-negative bacteria. A model of myotoxic mechanism has been proposed: an apo Lys49-PLA2 is activated by the entrance of a hydrophobic molecule (e.g. fatty acid) at the hydrophobic channel of the protein leading to a reorientation of a monomer. This reorientation causes a transition between 'inactive' to 'active' states, causing alignment of C-terminal and membrane-docking sites (MDoS) side-by-side and putting the membrane-disruption sites (MDiS) in the same plane, exposed to solvent and in a symmetric position for both monomers. The MDoS region stabilizes the toxin on membrane by the interaction of charged residues with phospholipid head groups. Subsequently, the MDiS region destabilizes the membrane with penetration of hydrophobic residues. This insertion causes a disorganization of the membrane, allowing an uncontrolled influx of ions (i.e. calcium and sodium), and eventually triggering irreversible intracellular alterations and cell death. The sequence is that of Basic phospholipase A2 homolog LmutTX from Lachesis muta muta (Bushmaster).